The chain runs to 139 residues: Ribosome-binding factor A (139 aa).

Residues 112–139 (EARTQGQAAPAPDVEPAPGAAPDDEAEE) form a disordered region. A compositionally biased stretch (low complexity) spans 119–132 (AAPAPDVEPAPGAA).

It belongs to the RbfA family. Monomer. Binds 30S ribosomal subunits, but not 50S ribosomal subunits or 70S ribosomes.

It localises to the cytoplasm. Functionally, one of several proteins that assist in the late maturation steps of the functional core of the 30S ribosomal subunit. Associates with free 30S ribosomal subunits (but not with 30S subunits that are part of 70S ribosomes or polysomes). Required for efficient processing of 16S rRNA. May interact with the 5'-terminal helix region of 16S rRNA. This chain is Ribosome-binding factor A, found in Anaeromyxobacter dehalogenans (strain 2CP-1 / ATCC BAA-258).